Here is a 233-residue protein sequence, read N- to C-terminus: Large ribosomal subunit protein uL1 (233 aa).

The protein belongs to the universal ribosomal protein uL1 family. Part of the 50S ribosomal subunit.

Functionally, binds directly to 23S rRNA. The L1 stalk is quite mobile in the ribosome, and is involved in E site tRNA release. Its function is as follows. Protein L1 is also a translational repressor protein, it controls the translation of the L11 operon by binding to its mRNA. In Shewanella sediminis (strain HAW-EB3), this protein is Large ribosomal subunit protein uL1.